A 370-amino-acid chain; its full sequence is Aminomethyltransferase (370 aa).

Belongs to the GcvT family. In terms of assembly, the glycine cleavage system is composed of four proteins: P, T, L and H.

The catalysed reaction is N(6)-[(R)-S(8)-aminomethyldihydrolipoyl]-L-lysyl-[protein] + (6S)-5,6,7,8-tetrahydrofolate = N(6)-[(R)-dihydrolipoyl]-L-lysyl-[protein] + (6R)-5,10-methylene-5,6,7,8-tetrahydrofolate + NH4(+). Its function is as follows. The glycine cleavage system catalyzes the degradation of glycine. This Clostridium botulinum (strain ATCC 19397 / Type A) protein is Aminomethyltransferase.